The primary structure comprises 91 residues: Small ribosomal subunit protein uS19 (91 aa).

It belongs to the universal ribosomal protein uS19 family.

Its function is as follows. Protein S19 forms a complex with S13 that binds strongly to the 16S ribosomal RNA. The protein is Small ribosomal subunit protein uS19 of Psychrobacter arcticus (strain DSM 17307 / VKM B-2377 / 273-4).